A 173-amino-acid chain; its full sequence is Probable chemoreceptor glutamine deamidase CheD (173 aa).

It belongs to the CheD family.

It catalyses the reaction L-glutaminyl-[protein] + H2O = L-glutamyl-[protein] + NH4(+). Its function is as follows. Probably deamidates glutamine residues to glutamate on methyl-accepting chemotaxis receptors (MCPs), playing an important role in chemotaxis. This is Probable chemoreceptor glutamine deamidase CheD from Haloarcula marismortui (strain ATCC 43049 / DSM 3752 / JCM 8966 / VKM B-1809) (Halobacterium marismortui).